The sequence spans 175 residues: MAEKRNIFLVGPMGAGKSTIGRQLAQILGMEFIDTDAEIEQRAGADISWIFDVEGEEGFRKREERIINELTQKQGIVLSTGGGAIVSKDNRNYLSARGTVIYLETTVEKQFQRTQRDKKRPLLQNVEDPRQVLEDLAKVRNPLYEEVADIILPTDEQSAKLMANQIIDLIDNLKI.

14 to 19 (GAGKST) contributes to the ATP binding site. Ser-18 provides a ligand contact to Mg(2+). Residues Asp-36, Arg-60, and Gly-82 each coordinate substrate. Arg-120 is a binding site for ATP. Arg-140 is a binding site for substrate. Gln-157 contributes to the ATP binding site.

This sequence belongs to the shikimate kinase family. In terms of assembly, monomer. The cofactor is Mg(2+).

The protein resides in the cytoplasm. It carries out the reaction shikimate + ATP = 3-phosphoshikimate + ADP + H(+). The protein operates within metabolic intermediate biosynthesis; chorismate biosynthesis; chorismate from D-erythrose 4-phosphate and phosphoenolpyruvate: step 5/7. Its function is as follows. Catalyzes the specific phosphorylation of the 3-hydroxyl group of shikimic acid using ATP as a cosubstrate. In Histophilus somni (strain 2336) (Haemophilus somnus), this protein is Shikimate kinase.